The primary structure comprises 1104 residues: Carbamoyl phosphate synthase large chain (1104 aa).

The segment at 1–402 (MPRRTDLKSV…ALQKALRSTE (402 aa)) is carboxyphosphate synthetic domain. Residues Arg129, Arg169, Gly175, Gly176, Glu208, Ile210, Glu215, Gly241, Val242, His243, Gln285, and Glu299 each coordinate ATP. One can recognise an ATP-grasp 1 domain in the interval 133-328 (KGVVERCGAE…IAKIAARLAV (196 aa)). Residues Gln285, Glu299, and Asn301 each contribute to the Mg(2+) site. Mn(2+) contacts are provided by Gln285, Glu299, and Asn301. The tract at residues 403–547 (KRGATFSWAG…YSSYDEEDET (145 aa)) is oligomerization domain. The tract at residues 548 to 948 (RPREKAAIVI…AFGKSQTAAY (401 aa)) is carbamoyl phosphate synthetic domain. Residues 676 to 867 (GQVLERAGLV…LAKAAARLMA (192 aa)) form the ATP-grasp 2 domain. Residues Arg712, Arg751, Leu753, Glu758, Gly783, Ile784, His785, Ser786, Gln826, and Glu838 each coordinate ATP. Residues Gln826, Glu838, and Asn840 each contribute to the Mg(2+) site. Positions 826, 838, and 840 each coordinate Mn(2+). The MGS-like domain occupies 949-1099 (GGLPTAGTAF…QEHTARLNAA (151 aa)). Residues 949–1104 (GGLPTAGTAF…RLNAAWEGRA (156 aa)) are allosteric domain.

Belongs to the CarB family. Composed of two chains; the small (or glutamine) chain promotes the hydrolysis of glutamine to ammonia, which is used by the large (or ammonia) chain to synthesize carbamoyl phosphate. Tetramer of heterodimers (alpha,beta)4. Mg(2+) serves as cofactor. The cofactor is Mn(2+).

It carries out the reaction hydrogencarbonate + L-glutamine + 2 ATP + H2O = carbamoyl phosphate + L-glutamate + 2 ADP + phosphate + 2 H(+). It catalyses the reaction hydrogencarbonate + NH4(+) + 2 ATP = carbamoyl phosphate + 2 ADP + phosphate + 2 H(+). It participates in amino-acid biosynthesis; L-arginine biosynthesis; carbamoyl phosphate from bicarbonate: step 1/1. Its pathway is pyrimidine metabolism; UMP biosynthesis via de novo pathway; (S)-dihydroorotate from bicarbonate: step 1/3. Its function is as follows. Large subunit of the glutamine-dependent carbamoyl phosphate synthetase (CPSase). CPSase catalyzes the formation of carbamoyl phosphate from the ammonia moiety of glutamine, carbonate, and phosphate donated by ATP, constituting the first step of 2 biosynthetic pathways, one leading to arginine and/or urea and the other to pyrimidine nucleotides. The large subunit (synthetase) binds the substrates ammonia (free or transferred from glutamine from the small subunit), hydrogencarbonate and ATP and carries out an ATP-coupled ligase reaction, activating hydrogencarbonate by forming carboxy phosphate which reacts with ammonia to form carbamoyl phosphate. This chain is Carbamoyl phosphate synthase large chain, found in Kineococcus radiotolerans (strain ATCC BAA-149 / DSM 14245 / SRS30216).